A 671-amino-acid chain; its full sequence is Phosphoenolpyruvate carboxykinase (ATP) 1 (671 aa).

Low complexity predominate over residues 1 to 10; it reads MSAGNGNATN. The segment at 1 to 44 is disordered; sequence MSAGNGNATNGDGGFSFPKGPVMPKITTGAAKRGSGVCHDDSGP. N-acetylserine is present on Ser-2. Residue Ser-62 is modified to Phosphoserine. The residue at position 66 (Thr-66) is a Phosphothreonine. Residues 100 to 127 form a disordered region; that stretch reads TRESGPKVVRGDPAEKKTDGSTTPAYAH. Over residues 108-118 the composition is skewed to basic and acidic residues; the sequence is VRGDPAEKKTD. Residue Arg-189 participates in substrate binding. Ca(2+) contacts are provided by His-270 and Asn-271. Residues Tyr-328 and Lys-334 each coordinate substrate. ATP is bound by residues Lys-334, His-353, and 369–377; that span reads GLSGTGKTT. Residues Lys-334 and His-353 each coordinate Mn(2+). Residue Asp-390 participates in Mn(2+) binding. Ca(2+) is bound at residue Gly-404. ATP contacts are provided by residues Glu-418, Arg-455, 574–575, Ile-575, and Thr-580; that span reads RI. A substrate-binding site is contributed by Arg-455.

This sequence belongs to the phosphoenolpyruvate carboxykinase (ATP) family. As to quaternary structure, monomer. It depends on Mn(2+) as a cofactor. In terms of tissue distribution, expressed in cotyledons, flowers, siliques, seeds, leaves, stems and roots. Localized in mid-veins.

Its subcellular location is the cytoplasm. The catalysed reaction is oxaloacetate + ATP = phosphoenolpyruvate + ADP + CO2. It participates in carbohydrate biosynthesis; gluconeogenesis. Its activity is regulated as follows. Allosterically activated by calcium. It may represent the only case of a monomeric, allosteric enzyme. Involved in the gluconeogenesis. Catalyzes the conversion of oxaloacetate (OAA) to phosphoenolpyruvate (PEP) through direct phosphoryl transfer between the nucleoside triphosphate and OAA. The polypeptide is Phosphoenolpyruvate carboxykinase (ATP) 1 (Arabidopsis thaliana (Mouse-ear cress)).